The sequence spans 2528 residues: Highly reducing polyketide synthase pspA (2528 aa).

The segment at 1 to 53 (MLAQDVEFVDLPPPEATAGAATTDNETSSFNSNPVPTPSEASSIGPPHQLPVP) is disordered. Residues 24–42 (DNETSSFNSNPVPTPSEAS) show a composition bias toward polar residues. One can recognise a Ketosynthase family 3 (KS3) domain in the interval 63–483 (VEPMAICGMA…GSNAHVLLGS (421 aa)). Catalysis depends on for beta-ketoacyl synthase activity residues Cys-235, His-371, and His-406. The malonyl-CoA:ACP transacylase (MAT) domain stretch occupies residues 590-909 (TFTGQGAQWA…HKDLLKAVGE (320 aa)). Positions 961 to 1089 (HDILGSRVLE…GQVCAGSDRE (129 aa)) are N-terminal hotdog fold. Positions 961-1230 (HDILGSRVLE…VSNGHVTIDI (270 aa)) are dehydratase (DH) domain. In terms of domain architecture, PKS/mFAS DH spans 961–1244 (HDILGSRVLE…MSAIGDAADA (284 aa)). The active-site Proton acceptor; for dehydratase activity is the His-993. The segment at 1099–1244 (PRQLSRRGWY…MSAIGDAADA (146 aa)) is C-terminal hotdog fold. Asp-1160 acts as the Proton donor; for dehydratase activity in catalysis. The methyltransferase (CMet) domain stretch occupies residues 1409 to 1587 (VFLELLAHRK…GFSGINLVSH (179 aa)). Positions 1803–2119 (GLVDTLCWKS…RGQHIGKIVI (317 aa)) are enoyl reductase (ER) (ER) domain. Residues 2143-2322 (RAYLFVGGLG…ASTVNIGVIQ (180 aa)) are ketoreductase (KR) domain. In terms of domain architecture, Carrier spans 2447 to 2525 (ETAELLAGEI…DLGVLAQKKL (79 aa)). Ser-2485 is subject to O-(pantetheine 4'-phosphoryl)serine.

It carries out the reaction 9 malonyl-CoA + acetyl-CoA + S-adenosyl-L-methionine + 13 NADPH + 20 H(+) = soppiline A + S-adenosyl-L-homocysteine + 9 CO2 + 13 NADP(+) + 10 CoA + 7 H2O. It participates in secondary metabolite biosynthesis. Its function is as follows. Highly reducing polyketide synthase; part of the gene cluster that mediates the biosynthesis of the alkylresorcinols called soppilines. The biosynthesis starts with the HR-PKS pspA-catalyzed carbon chain assembly through nine chain elongation cycles, using acetyl CoA and malonyl CoA as a starter and extender units, respectively, to produce the polyketide soppiline A. In the first round, the KR, DH, and CMeT domains work to produce 2-methyl-2-butenyl thioester. In rounds 2 to 5, the KR, DH, and ER domains fully catalyze the reduction of the elongated beta-ketothioester, resulting in the insertion of eight methylene units. The unusual Z,E,Z-triene motif is likely constructed during rounds 6 to 8. Typically, the DH domain introduces a double bond at an alpha,beta-position of an elongated polyketide chain, with the dehydration of a beta-hydroxy group. The last extension cycle would be carried out with L-oriented beta-ketoreduction by the KR domain to produce beta-hydroxy carboxylic acid soppiline A. The type III PKS pspB intercepts the elongated polyketide chain at round 8 from the HR-PKS pspA, followed by a tri-keto extension and decarboxylative aldol cyclization to produce 1,3,5-trisubstituted alkylresorcinol soppiline B. Subsequently, the cytochrome P450 monooxygenase pspC catalyzes three-step oxidations at the C-4 methyl group to carboxylic acid to yield soppiline C. This Penicillium soppii protein is Highly reducing polyketide synthase pspA.